A 128-amino-acid polypeptide reads, in one-letter code: Ribonuclease pancreatic B (128 aa).

Residues 1–21 (AESSAMKFQRQHMDPEGSPSN) form a disordered region. Substrate-binding residues include K7 and R10. H12 (proton acceptor) is an active-site residue. N21 and N34 each carry an N-linked (GlcNAc...) asparagine glycan. Intrachain disulfides connect C26–C84, C40–C95, C58–C110, and C65–C72. Residues 41-45 (KPVNT), K66, and R85 contribute to the substrate site. Catalysis depends on H119, which acts as the Proton donor.

Belongs to the pancreatic ribonuclease family. As to expression, pancreas.

The protein localises to the secreted. It carries out the reaction an [RNA] containing cytidine + H2O = an [RNA]-3'-cytidine-3'-phosphate + a 5'-hydroxy-ribonucleotide-3'-[RNA].. The enzyme catalyses an [RNA] containing uridine + H2O = an [RNA]-3'-uridine-3'-phosphate + a 5'-hydroxy-ribonucleotide-3'-[RNA].. The chain is Ribonuclease pancreatic B from Cavia porcellus (Guinea pig).